The following is a 208-amino-acid chain: Protein-L-isoaspartate O-methyltransferase (208 aa).

Residue Ser-59 is part of the active site.

The protein belongs to the methyltransferase superfamily. L-isoaspartyl/D-aspartyl protein methyltransferase family.

It is found in the cytoplasm. It carries out the reaction [protein]-L-isoaspartate + S-adenosyl-L-methionine = [protein]-L-isoaspartate alpha-methyl ester + S-adenosyl-L-homocysteine. Catalyzes the methyl esterification of L-isoaspartyl residues in peptides and proteins that result from spontaneous decomposition of normal L-aspartyl and L-asparaginyl residues. It plays a role in the repair and/or degradation of damaged proteins. This is Protein-L-isoaspartate O-methyltransferase from Salmonella newport (strain SL254).